A 476-amino-acid polypeptide reads, in one-letter code: Undecaprenyl-phosphate galactose phosphotransferase (476 aa).

A run of 5 helical transmembrane segments spans residues 15–35 (IFLAISDLIFFNLALWFSLGC), 52–72 (LDTRVITHFILSVVCVGWFWI), 93–113 (TIVIFAIFDLALIAFTKWQFS), 115–135 (YVWVFCWTFALILVPFFRALT), and 283–303 (FDIVCSIMILIIASPLMIYLW). The Cytoplasmic segment spans residues 304 to 476 (YKVTRDGGPA…KVVLRRDGAY (173 aa)).

The protein belongs to the bacterial sugar transferase family.

It is found in the cell inner membrane. The enzyme catalyses di-trans,octa-cis-undecaprenyl phosphate + UDP-alpha-D-galactose = alpha-D-galactosyl-di-trans,octa-cis-undecaprenyl diphosphate + UMP. Its pathway is bacterial outer membrane biogenesis; LPS O-antigen biosynthesis. Is responsible for transferring galactose-1-phosphate to the lipid precursor undecaprenol phosphate in the first steps of O-polysaccharide biosynthesis. The polypeptide is Undecaprenyl-phosphate galactose phosphotransferase (rfbP) (Salmonella typhimurium (strain LT2 / SGSC1412 / ATCC 700720)).